The following is a 344-amino-acid chain: Phosphoribosylformylglycinamidine cyclo-ligase (344 aa).

Belongs to the AIR synthase family.

Its subcellular location is the cytoplasm. The catalysed reaction is 2-formamido-N(1)-(5-O-phospho-beta-D-ribosyl)acetamidine + ATP = 5-amino-1-(5-phospho-beta-D-ribosyl)imidazole + ADP + phosphate + H(+). The protein operates within purine metabolism; IMP biosynthesis via de novo pathway; 5-amino-1-(5-phospho-D-ribosyl)imidazole from N(2)-formyl-N(1)-(5-phospho-D-ribosyl)glycinamide: step 2/2. This is Phosphoribosylformylglycinamidine cyclo-ligase from Haemophilus influenzae (strain PittEE).